A 415-amino-acid chain; its full sequence is Multifunctional CCA protein (415 aa).

ATP is bound by residues glycine 8 and arginine 11. CTP is bound by residues glycine 8 and arginine 11. Residues glutamate 21 and aspartate 23 each contribute to the Mg(2+) site. Arginine 91, arginine 137, and arginine 140 together coordinate ATP. Positions 91, 137, and 140 each coordinate CTP. Positions 228–329 (AGTHTLMALD…VELFEGLDLF (102 aa)) constitute an HD domain.

It belongs to the tRNA nucleotidyltransferase/poly(A) polymerase family. Bacterial CCA-adding enzyme type 1 subfamily. Monomer. Can also form homodimers and oligomers. Mg(2+) is required as a cofactor. Ni(2+) serves as cofactor.

The catalysed reaction is a tRNA precursor + 2 CTP + ATP = a tRNA with a 3' CCA end + 3 diphosphate. It carries out the reaction a tRNA with a 3' CCA end + 2 CTP + ATP = a tRNA with a 3' CCACCA end + 3 diphosphate. Catalyzes the addition and repair of the essential 3'-terminal CCA sequence in tRNAs without using a nucleic acid template. Adds these three nucleotides in the order of C, C, and A to the tRNA nucleotide-73, using CTP and ATP as substrates and producing inorganic pyrophosphate. tRNA 3'-terminal CCA addition is required both for tRNA processing and repair. Also involved in tRNA surveillance by mediating tandem CCA addition to generate a CCACCA at the 3' terminus of unstable tRNAs. While stable tRNAs receive only 3'-terminal CCA, unstable tRNAs are marked with CCACCA and rapidly degraded. The protein is Multifunctional CCA protein of Halorhodospira halophila (strain DSM 244 / SL1) (Ectothiorhodospira halophila (strain DSM 244 / SL1)).